The chain runs to 174 residues: MIRNSIKSISDYPKPGILFRDVTSLMEDPEAYRATMQVLIERYSNTGITKVIGTEARGFLFGAPLALELGVGFVPVRKPGKLPREVISESYELEYGKDILEIHVDAIVEGDKVLLVDDLLATGGTIEATTKLARRLGGVVEDAAFVINLPDIGGAERLKGIGLNVFSICDFDGH.

Belongs to the purine/pyrimidine phosphoribosyltransferase family. Homodimer.

It is found in the cytoplasm. It catalyses the reaction AMP + diphosphate = 5-phospho-alpha-D-ribose 1-diphosphate + adenine. It functions in the pathway purine metabolism; AMP biosynthesis via salvage pathway; AMP from adenine: step 1/1. Functionally, catalyzes a salvage reaction resulting in the formation of AMP, that is energically less costly than de novo synthesis. The chain is Adenine phosphoribosyltransferase from Photobacterium profundum (strain SS9).